We begin with the raw amino-acid sequence, 131 residues long: 1,4-dihydroxy-2-naphthoyl-CoA hydrolase (131 aa).

The active site involves Asp-7.

It belongs to the 4-hydroxybenzoyl-CoA thioesterase family. DHNA-CoA hydrolase subfamily.

It carries out the reaction 1,4-dihydroxy-2-naphthoyl-CoA + H2O = 1,4-dihydroxy-2-naphthoate + CoA + H(+). The protein operates within cofactor biosynthesis; phylloquinone biosynthesis. It functions in the pathway quinol/quinone metabolism; 1,4-dihydroxy-2-naphthoate biosynthesis; 1,4-dihydroxy-2-naphthoate from chorismate: step 7/7. Its function is as follows. Catalyzes the hydrolysis of 1,4-dihydroxy-2-naphthoyl-CoA (DHNA-CoA) to 1,4-dihydroxy-2-naphthoate (DHNA), a reaction involved in phylloquinone (vitamin K1) biosynthesis. In Synechococcus sp. (strain RCC307), this protein is 1,4-dihydroxy-2-naphthoyl-CoA hydrolase.